A 209-amino-acid polypeptide reads, in one-letter code: Ion-translocating oxidoreductase complex subunit G (209 aa).

A helical transmembrane segment spans residues 9–29 (GLILAVFACVSTGLVALTYAL). Position 175 is an FMN phosphoryl threonine (Thr-175).

Belongs to the RnfG family. In terms of assembly, the complex is composed of six subunits: RnfA, RnfB, RnfC, RnfD, RnfE and RnfG. FMN is required as a cofactor.

The protein localises to the cell inner membrane. In terms of biological role, part of a membrane-bound complex that couples electron transfer with translocation of ions across the membrane. The chain is Ion-translocating oxidoreductase complex subunit G from Vibrio cholerae serotype O1 (strain ATCC 39315 / El Tor Inaba N16961).